We begin with the raw amino-acid sequence, 289 residues long: Formamidopyrimidine-DNA glycosylase (289 aa).

The active-site Schiff-base intermediate with DNA is Pro2. Glu3 serves as the catalytic Proton donor. Lys61 serves as the catalytic Proton donor; for beta-elimination activity. DNA-binding residues include His96, Arg115, and Lys161. The FPG-type zinc-finger motif lies at 247 to 281 (SAYGQEDRPCPRCGTAIRREKFMNRSSFSCPKCQR). The active-site Proton donor; for delta-elimination activity is Arg271.

Belongs to the FPG family. As to quaternary structure, monomer. Requires Zn(2+) as cofactor.

It catalyses the reaction Hydrolysis of DNA containing ring-opened 7-methylguanine residues, releasing 2,6-diamino-4-hydroxy-5-(N-methyl)formamidopyrimidine.. It carries out the reaction 2'-deoxyribonucleotide-(2'-deoxyribose 5'-phosphate)-2'-deoxyribonucleotide-DNA = a 3'-end 2'-deoxyribonucleotide-(2,3-dehydro-2,3-deoxyribose 5'-phosphate)-DNA + a 5'-end 5'-phospho-2'-deoxyribonucleoside-DNA + H(+). Its function is as follows. Involved in base excision repair of DNA damaged by oxidation or by mutagenic agents. Acts as a DNA glycosylase that recognizes and removes damaged bases. Has a preference for oxidized purines, such as 7,8-dihydro-8-oxoguanine (8-oxoG). Has AP (apurinic/apyrimidinic) lyase activity and introduces nicks in the DNA strand. Cleaves the DNA backbone by beta-delta elimination to generate a single-strand break at the site of the removed base with both 3'- and 5'-phosphates. In Rhodococcus opacus (strain B4), this protein is Formamidopyrimidine-DNA glycosylase.